The following is a 240-amino-acid chain: Phosphoribosylaminoimidazole-succinocarboxamide synthase (240 aa).

It belongs to the SAICAR synthetase family.

It catalyses the reaction 5-amino-1-(5-phospho-D-ribosyl)imidazole-4-carboxylate + L-aspartate + ATP = (2S)-2-[5-amino-1-(5-phospho-beta-D-ribosyl)imidazole-4-carboxamido]succinate + ADP + phosphate + 2 H(+). Its pathway is purine metabolism; IMP biosynthesis via de novo pathway; 5-amino-1-(5-phospho-D-ribosyl)imidazole-4-carboxamide from 5-amino-1-(5-phospho-D-ribosyl)imidazole-4-carboxylate: step 1/2. In Anoxybacillus flavithermus (strain DSM 21510 / WK1), this protein is Phosphoribosylaminoimidazole-succinocarboxamide synthase.